The chain runs to 381 residues: Cytochrome b (381 aa).

The next 4 helical transmembrane spans lie at 33–53 (FGSL…FLAM), 77–98 (WLLR…FLHV), 113–133 (WNIG…GYVL), and 178–198 (FFAF…VHLL). Positions 83 and 97 each coordinate heme b. Residues His182 and His196 each contribute to the heme b site. Residue His201 coordinates a ubiquinone. The next 4 membrane-spanning stretches (helical) occupy residues 226-246 (IKDA…ALFS), 288-308 (LGGV…PLLH), 320-340 (VSQT…WIGG), and 347-367 (FIII…VMMP).

The protein belongs to the cytochrome b family. The cytochrome bc1 complex contains 11 subunits: 3 respiratory subunits (MT-CYB, CYC1 and UQCRFS1), 2 core proteins (UQCRC1 and UQCRC2) and 6 low-molecular weight proteins (UQCRH/QCR6, UQCRB/QCR7, UQCRQ/QCR8, UQCR10/QCR9, UQCR11/QCR10 and a cleavage product of UQCRFS1). This cytochrome bc1 complex then forms a dimer. It depends on heme b as a cofactor.

The protein localises to the mitochondrion inner membrane. Its function is as follows. Component of the ubiquinol-cytochrome c reductase complex (complex III or cytochrome b-c1 complex) that is part of the mitochondrial respiratory chain. The b-c1 complex mediates electron transfer from ubiquinol to cytochrome c. Contributes to the generation of a proton gradient across the mitochondrial membrane that is then used for ATP synthesis. The chain is Cytochrome b (MT-CYB) from Dasyurus hallucatus (Northern quoll).